The primary structure comprises 155 residues: Transcriptional repressor NrdR (155 aa).

The disordered stretch occupies residues 1 to 24 (MRCPYCGHEDSQVKDSRPTEDGAA). A zinc finger spans residues 3-34 (CPYCGHEDSQVKDSRPTEDGAAIRRRRQCEDC). Residues 7 to 24 (GHEDSQVKDSRPTEDGAA) are compositionally biased toward basic and acidic residues. The region spanning 49 to 139 (VVVIKAGGTR…VYRDFTEARD (91 aa)) is the ATP-cone domain.

This sequence belongs to the NrdR family. The cofactor is Zn(2+).

Negatively regulates transcription of bacterial ribonucleotide reductase nrd genes and operons by binding to NrdR-boxes. The sequence is that of Transcriptional repressor NrdR from Sphingopyxis alaskensis (strain DSM 13593 / LMG 18877 / RB2256) (Sphingomonas alaskensis).